We begin with the raw amino-acid sequence, 196 residues long: NADPH:quinone oxidoreductase (196 aa).

This sequence belongs to the SsuE family. As to quaternary structure, homotetramer. Requires FMN as cofactor.

The protein localises to the cell membrane. It catalyses the reaction a quinone + NADH + H(+) = a quinol + NAD(+). The catalysed reaction is a quinone + NADPH + H(+) = a quinol + NADP(+). Functionally, the enzyme apparently serves as a quinone reductase in connection with conjugation reactions of hydroquinones involved in detoxification pathways. In Arabidopsis thaliana (Mouse-ear cress), this protein is NADPH:quinone oxidoreductase (NQR).